Here is a 517-residue protein sequence, read N- to C-terminus: Glutamate--tRNA ligase (517 aa).

The short motif at 10 to 20 (PSPSGFLHVGG) is the 'HIGH' region element. 4 residues coordinate Zn(2+): cysteine 107, cysteine 109, cysteine 134, and aspartate 136. A 'KMSKS' region motif is present at residues 250 to 254 (KLSKR). Residue lysine 253 coordinates ATP.

It belongs to the class-I aminoacyl-tRNA synthetase family. Glutamate--tRNA ligase type 1 subfamily. As to quaternary structure, monomer. It depends on Zn(2+) as a cofactor.

The protein resides in the cytoplasm. It catalyses the reaction tRNA(Glu) + L-glutamate + ATP = L-glutamyl-tRNA(Glu) + AMP + diphosphate. In terms of biological role, catalyzes the attachment of glutamate to tRNA(Glu) in a two-step reaction: glutamate is first activated by ATP to form Glu-AMP and then transferred to the acceptor end of tRNA(Glu). The protein is Glutamate--tRNA ligase of Leptospira biflexa serovar Patoc (strain Patoc 1 / ATCC 23582 / Paris).